The chain runs to 174 residues: Small ribosomal subunit protein uS5 (174 aa).

In terms of domain architecture, S5 DRBM spans 20–83 (IEDQLVAINR…EAGKKRMIKV (64 aa)).

It belongs to the universal ribosomal protein uS5 family. In terms of assembly, part of the 30S ribosomal subunit. Contacts proteins S4 and S8.

In terms of biological role, with S4 and S12 plays an important role in translational accuracy. Functionally, located at the back of the 30S subunit body where it stabilizes the conformation of the head with respect to the body. The chain is Small ribosomal subunit protein uS5 from Lactobacillus gasseri (strain ATCC 33323 / DSM 20243 / BCRC 14619 / CIP 102991 / JCM 1131 / KCTC 3163 / NCIMB 11718 / NCTC 13722 / AM63).